The following is a 476-amino-acid chain: Glycogen synthase (476 aa).

Lysine 15 contributes to the ADP-alpha-D-glucose binding site.

This sequence belongs to the glycosyltransferase 1 family. Bacterial/plant glycogen synthase subfamily.

The enzyme catalyses [(1-&gt;4)-alpha-D-glucosyl](n) + ADP-alpha-D-glucose = [(1-&gt;4)-alpha-D-glucosyl](n+1) + ADP + H(+). Its pathway is glycan biosynthesis; glycogen biosynthesis. In terms of biological role, synthesizes alpha-1,4-glucan chains using ADP-glucose. This chain is Glycogen synthase, found in Haemophilus influenzae (strain PittGG).